Reading from the N-terminus, the 549-residue chain is MKNINPSQTAAWQALQHHFDAMKEVQISELFAQDSDRFAHFSATFDDLMLVDYSKNRITTETMEKLHALARETDLSAAIQSMFAGEKINRTEDRAVLHVALRNRSNTPILVDGKDVMPEVNAVLAKMKDFSERVIGGEWKGYTGKTITDVVNIGIGGSDLGPFMVTEALKPYKNHLNMHFVSNVDGTHIAETLKPLNPETTLFLVASKTFTTQETMTNAHSARDWFLNTAKDEKHVAKHFAALSTNAKAVGEFGIDTNNMFEFWDWVGGRYSLWSAIGLSIILSLGFENFEKLLSGAHAMDKHFASTPAEKNLPVLLALIGIWYNNFFGAETEAILPYDQYMHRFAAYFQQGNMESNGKSADRNGNPVDYQTGPIIWGEPGTNGQHAFYQLIHQGTKLIPCDFIAPAVSHNPLSDHHSKLLSNFFAQTEALAFGKSRDVVEAEFAAAGKSAKDVEHVAPFKVFEGNRPTNSILLREITPYSLGALIALYEHKIFTQGAILNIFTFDQWGVELGKQLANRILPELENDSTIDSHDSSTNGLINRFKAWRN.

The active-site Proton donor is the glutamate 355. Active-site residues include histidine 386 and lysine 514.

This sequence belongs to the GPI family.

It localises to the cytoplasm. The enzyme catalyses alpha-D-glucose 6-phosphate = beta-D-fructose 6-phosphate. It participates in carbohydrate biosynthesis; gluconeogenesis. It functions in the pathway carbohydrate degradation; glycolysis; D-glyceraldehyde 3-phosphate and glycerone phosphate from D-glucose: step 2/4. In terms of biological role, catalyzes the reversible isomerization of glucose-6-phosphate to fructose-6-phosphate. This Pectobacterium carotovorum subsp. carotovorum (strain PC1) protein is Glucose-6-phosphate isomerase.